Consider the following 417-residue polypeptide: MENPQIEMGAFKANGPQLQNGGLRSSMVQSWNLQRFVESALRSIRIVIFTSKLNLLLPFGPASIILHYTTSRHGLVFLFSMLGITPLAERLGYATEQLAIYTGPTVGGLLNATFGNATEMIIAIYALKNGMIRVVQQSLLGSILSNMLLVMGCAFFAGGIVHRNKDQVFSKATAVVNSGLLLMAVMGLMFPAVLHFTHSEVRQGASEVSLSRFSSCIMLVAYASYLYFQLSGRNNAYSPIGSEEMPNEDAAEEDEESEIGMWESIAWLAMLTLWVSILSEYLVNAIEGASDSLNLPVAFISVILLPIVGNAAEHASAIMFAMKDKLDITLGVAIGSSTQISMFVIPFCVVIGWMMGQKMDLNFQLFETATLFITVLVVAFMLQDGVANYLKGLMLILCYLIVAASFFVHVDPQSSDD.

The Cytoplasmic portion of the chain corresponds to 1 to 45 (MENPQIEMGAFKANGPQLQNGGLRSSMVQSWNLQRFVESALRSIR). The helical transmembrane segment at 46 to 66 (IVIFTSKLNLLLPFGPASIIL) threads the bilayer. Residues 67-73 (HYTTSRH) lie on the Extracellular side of the membrane. The helical transmembrane segment at 74–94 (GLVFLFSMLGITPLAERLGYA) threads the bilayer. Residues 95-105 (TEQLAIYTGPT) lie on the Cytoplasmic side of the membrane. Residues 106–126 (VGGLLNATFGNATEMIIAIYA) traverse the membrane as a helical segment. Residues 115-150 (GNATEMIIAIYALKNGMIRVVQQSLLGSILSNMLLV) form a cation selection region. The Extracellular segment spans residues 127-140 (LKNGMIRVVQQSLL). The chain crosses the membrane as a helical span at residues 141–161 (GSILSNMLLVMGCAFFAGGIV). Residues 162–173 (HRNKDQVFSKAT) are Cytoplasmic-facing. The chain crosses the membrane as a helical span at residues 174-194 (AVVNSGLLLMAVMGLMFPAVL). Residues 195 to 207 (HFTHSEVRQGASE) lie on the Extracellular side of the membrane. A helical transmembrane segment spans residues 208–230 (VSLSRFSSCIMLVAYASYLYFQL). Over 231-258 (SGRNNAYSPIGSEEMPNEDAAEEDEESE) the chain is Cytoplasmic. The helical transmembrane segment at 259 to 279 (IGMWESIAWLAMLTLWVSILS) threads the bilayer. Over 280 to 291 (EYLVNAIEGASD) the chain is Extracellular. A helical transmembrane segment spans residues 292 to 312 (SLNLPVAFISVILLPIVGNAA). A cation selection region spans residues 309 to 344 (GNAAEHASAIMFAMKDKLDITLGVAIGSSTQISMFV). At 313 to 330 (EHASAIMFAMKDKLDITL) the chain is on the cytoplasmic side. A helical membrane pass occupies residues 331–351 (GVAIGSSTQISMFVIPFCVVI). The Extracellular portion of the chain corresponds to 352–360 (GWMMGQKMD). Residues 361–381 (LNFQLFETATLFITVLVVAFM) traverse the membrane as a helical segment. Topologically, residues 382–389 (LQDGVANY) are cytoplasmic. The chain crosses the membrane as a helical span at residues 390-410 (LKGLMLILCYLIVAASFFVHV). Residues 411-417 (DPQSSDD) lie on the Extracellular side of the membrane.

The protein belongs to the Ca(2+):cation antiporter (CaCA) (TC 2.A.19) family. Cation/proton exchanger (CAX) subfamily. In terms of tissue distribution, ubiquitous.

The protein localises to the vacuole membrane. Vacuolar cation/proton exchanger (CAX). Translocates Ca(2+) and other metal ions into vacuoles using the proton gradient formed by H(+)-ATPase and H(+)-pyrophosphatase. The sequence is that of Vacuolar cation/proton exchanger 3 (CAX3) from Oryza sativa subsp. japonica (Rice).